Reading from the N-terminus, the 524-residue chain is Probable myosin-binding protein 5 (524 aa).

The chain crosses the membrane as a helical span at residues 20–40; sequence FLIYALLEWILIIILFIDGFL. The GTD-binding domain maps to 299-397; that stretch reads SILQHLNRQV…ELEAGIEVYR (99 aa). A coiled-coil region spans residues 462-490; sequence SRKDMLVKEISEITERLNAIESKGELLQQ.

Its subcellular location is the membrane. Probable membrane-anchored myosin receptors. The polypeptide is Probable myosin-binding protein 5 (Arabidopsis thaliana (Mouse-ear cress)).